A 195-amino-acid polypeptide reads, in one-letter code: Myosin regulatory light chain, striated muscle, 25 kDa isoform (195 aa).

Positions 1-17 (AKDKEKKEKKDKKKDDA) are enriched in basic and acidic residues. A disordered region spans residues 1–39 (AKDKEKKEKKDKKKDDAPAEEAPAAAAAPAEEAAPTPSA). Low complexity predominate over residues 20–39 (EEAPAAAAAPAEEAAPTPSA). 2 EF-hand domains span residues 55–90 (NQIQ…IGRE) and 124–159 (DTEG…VGDQ). Asp-68, Asp-70, Asp-72, and Asp-79 together coordinate Ca(2+).

In terms of assembly, myosin is a hexamer of 2 heavy chains and 4 light chains.

Its function is as follows. Plays an important role in regulation of muscle cell contractile activity. The chain is Myosin regulatory light chain, striated muscle, 25 kDa isoform from Lumbricus terrestris (Common earthworm).